We begin with the raw amino-acid sequence, 381 residues long: DNA repair protein RAD51 homolog 3 (381 aa).

The disordered stretch occupies residues 1 to 24 (MDEDINKDTNNNNNTTDSNNNNNN). Residues 8 to 24 (DTNNNNNTTDSNNNNNN) show a composition bias toward low complexity. ATP is bound at residue 89–96 (GVPGIGKT). Positions 313–381 (GFNHPPPLNP…NDENEMYIEN (69 aa)) are disordered. Residues 323-377 (EDQEQEKEKEKRKKKNNNNNNNNNNNNNNNNNNNNNNNNNNNNNNNNKNNDENEM) adopt a coiled-coil conformation. Positions 339-370 (NNNNNNNNNNNNNNNNNNNNNNNNNNNNNNNK) are enriched in low complexity.

The protein belongs to the RecA family. RAD51 subfamily.

It localises to the nucleus. In terms of biological role, involved in the homologous recombination repair (HRR) pathway of double-stranded DNA breaks arising during DNA replication or induced by DNA-damaging agents. This chain is DNA repair protein RAD51 homolog 3 (rad51c), found in Dictyostelium discoideum (Social amoeba).